A 655-amino-acid chain; its full sequence is Fructose-1,6-bisphosphatase class 3 (655 aa).

It belongs to the FBPase class 3 family. Requires Mn(2+) as cofactor.

The catalysed reaction is beta-D-fructose 1,6-bisphosphate + H2O = beta-D-fructose 6-phosphate + phosphate. It functions in the pathway carbohydrate biosynthesis; gluconeogenesis. The chain is Fructose-1,6-bisphosphatase class 3 from Porphyromonas gingivalis (strain ATCC BAA-308 / W83).